The primary structure comprises 275 residues: Polyamine aminopropyltransferase (275 aa).

The 234-residue stretch at 2–235 (ELWFTEKQTK…GLWTFTIGSK (234 aa)) folds into the PABS domain. An S-methyl-5'-thioadenosine-binding site is contributed by Gln31. Spermidine is bound by residues His62 and Asp86. Residues Glu106 and 137–138 (DG) each bind S-methyl-5'-thioadenosine. Residue Asp155 is the Proton acceptor of the active site. Residue 155–158 (DSTE) participates in spermidine binding. An S-methyl-5'-thioadenosine-binding site is contributed by Pro162.

This sequence belongs to the spermidine/spermine synthase family. As to quaternary structure, homodimer or homotetramer.

It localises to the cytoplasm. The enzyme catalyses S-adenosyl 3-(methylsulfanyl)propylamine + putrescine = S-methyl-5'-thioadenosine + spermidine + H(+). It participates in amine and polyamine biosynthesis; spermidine biosynthesis; spermidine from putrescine: step 1/1. Its function is as follows. Catalyzes the irreversible transfer of a propylamine group from the amino donor S-adenosylmethioninamine (decarboxy-AdoMet) to putrescine (1,4-diaminobutane) to yield spermidine. The protein is Polyamine aminopropyltransferase of Bacillus mycoides (strain KBAB4) (Bacillus weihenstephanensis).